Here is a 96-residue protein sequence, read N- to C-terminus: RNA-binding protein Hfq (96 aa).

In terms of domain architecture, Sm spans 9–68; the sequence is DPYLNALRRERIPVSIYLVNGIKLQGQIESFDQFVILLKNTVNQMVYKHAISTVVPARSV. The interval 67–96 is disordered; that stretch reads SVSHHNNSNNSNQQNYQQEQQTDSNVEKAE. Residues 72 to 87 are compositionally biased toward low complexity; the sequence is NNSNNSNQQNYQQEQQ.

It belongs to the Hfq family. In terms of assembly, homohexamer.

In terms of biological role, RNA chaperone that binds small regulatory RNA (sRNAs) and mRNAs to facilitate mRNA translational regulation in response to envelope stress, environmental stress and changes in metabolite concentrations. Also binds with high specificity to tRNAs. This Pasteurella multocida (strain Pm70) protein is RNA-binding protein Hfq.